The sequence spans 1100 residues: Serine/threonine/tyrosine-interacting-like protein 2 (1100 aa).

The segment covering 1–12 (MASSVEDQQLQQ) has biased composition (polar residues). The segment at 1-21 (MASSVEDQQLQQEEAESVKDV) is disordered. The 149-residue stretch at 141–289 (SPVDEVWPNV…LRQLNETLME (149 aa)) folds into the Tyrosine-protein phosphatase domain. Polar residues predominate over residues 356–374 (CGSQQPNMQQPADQPSLPG). 8 disordered regions span residues 356–383 (CGSQ…EDGD), 411–436 (EDED…TSED), 479–504 (AAAR…DDVQ), 542–561 (KENA…APDL), 575–615 (KQQK…ERSR), 667–686 (VLSG…TPAP), 888–1060 (CEKP…DEEI), and 1075–1100 (VAEE…HDHK). Residues 418–428 (DKTQRAVRPDD) are compositionally biased toward basic and acidic residues. Basic and acidic residues predominate over residues 580–615 (HGGEENKEEILQMSRGEDTATARRRQRREEVLERSR). Positions 667-676 (VLSGRSTRSL) are enriched in low complexity. Positions 888-898 (CEKPKPKRDYG) are enriched in basic and acidic residues. Composition is skewed to polar residues over residues 907-916 (ASANNPTSSI), 994-1013 (SYSS…TSFA), and 1029-1041 (FQNH…SSVY). Residues 1089-1100 (RKQEESKSHDHK) are compositionally biased toward basic and acidic residues.

Belongs to the protein-tyrosine phosphatase family. Non-receptor class dual specificity subfamily. As to expression, expressed in muscle fibers in a regular striated pattern (at protein level).

The protein localises to the cytoplasm. It localises to the myofibril. It is found in the sarcomere. Its function is as follows. Required for myofiber maturation. The polypeptide is Serine/threonine/tyrosine-interacting-like protein 2 (styxl2) (Danio rerio (Zebrafish)).